A 114-amino-acid chain; its full sequence is T cell receptor beta variable 5-8 (114 aa).

The first 21 residues, 1-21 (MGPRLLFWALLCLLGTGPVEA), serve as a signal peptide directing secretion. The region spanning 22 to 114 (GVTQSPTHLI…SALYLCASSL (93 aa)) is the Ig-like domain. Residues C42 and C110 are joined by a disulfide bond. N-linked (GlcNAc...) asparagine glycosylation occurs at N90.

As to quaternary structure, alpha-beta TR is a heterodimer composed of an alpha and beta chain; disulfide-linked. The alpha-beta TR is associated with the transmembrane signaling CD3 coreceptor proteins to form the TR-CD3 (TcR or TCR). The assembly of alpha-beta TR heterodimers with CD3 occurs in the endoplasmic reticulum where a single alpha-beta TR heterodimer associates with one CD3D-CD3E heterodimer, one CD3G-CD3E heterodimer and one CD247 homodimer forming a stable octameric structure. CD3D-CD3E and CD3G-CD3E heterodimers preferentially associate with TR alpha and TR beta chains, respectively. The association of the CD247 homodimer is the last step of TcR assembly in the endoplasmic reticulum and is required for transport to the cell surface.

It is found in the cell membrane. V region of the variable domain of T cell receptor (TR) beta chain that participates in the antigen recognition. Alpha-beta T cell receptors are antigen specific receptors which are essential to the immune response and are present on the cell surface of T lymphocytes. Recognize peptide-major histocompatibility (MH) (pMH) complexes that are displayed by antigen presenting cells (APC), a prerequisite for efficient T cell adaptive immunity against pathogens. Binding of alpha-beta TR to pMH complex initiates TR-CD3 clustering on the cell surface and intracellular activation of LCK that phosphorylates the ITAM motifs of CD3G, CD3D, CD3E and CD247 enabling the recruitment of ZAP70. In turn ZAP70 phosphorylates LAT, which recruits numerous signaling molecules to form the LAT signalosome. The LAT signalosome propagates signal branching to three major signaling pathways, the calcium, the mitogen-activated protein kinase (MAPK) kinase and the nuclear factor NF-kappa-B (NF-kB) pathways, leading to the mobilization of transcription factors that are critical for gene expression and essential for T cell growth and differentiation. The T cell repertoire is generated in the thymus, by V-(D)-J rearrangement. This repertoire is then shaped by intrathymic selection events to generate a peripheral T cell pool of self-MH restricted, non-autoaggressive T cells. Post-thymic interaction of alpha-beta TR with the pMH complexes shapes TR structural and functional avidity. This chain is T cell receptor beta variable 5-8, found in Homo sapiens (Human).